The sequence spans 200 residues: Recombination protein RecR (200 aa).

Residues 59-74 (CEKCNTFTEAQICEVC) form a C4-type zinc finger. One can recognise a Toprim domain in the interval 82 to 177 (ALLCVVETPA…AVTRLARGVP (96 aa)).

This sequence belongs to the RecR family.

Functionally, may play a role in DNA repair. It seems to be involved in an RecBC-independent recombinational process of DNA repair. It may act with RecF and RecO. The protein is Recombination protein RecR of Burkholderia mallei (strain NCTC 10247).